Here is a 37-residue protein sequence, read N- to C-terminus: Cytochrome b6-f complex subunit 5 (37 aa).

The chain crosses the membrane as a helical span at residues 5–25; that stretch reads LLSGIVLGLIPVTLAGLFVTA.

This sequence belongs to the PetG family. As to quaternary structure, the 4 large subunits of the cytochrome b6-f complex are cytochrome b6, subunit IV (17 kDa polypeptide, PetD), cytochrome f and the Rieske protein, while the 4 small subunits are PetG, PetL, PetM and PetN. The complex functions as a dimer.

It localises to the plastid. It is found in the chloroplast thylakoid membrane. Its function is as follows. Component of the cytochrome b6-f complex, which mediates electron transfer between photosystem II (PSII) and photosystem I (PSI), cyclic electron flow around PSI, and state transitions. PetG is required for either the stability or assembly of the cytochrome b6-f complex. The protein is Cytochrome b6-f complex subunit 5 of Chlorokybus atmophyticus (Soil alga).